Reading from the N-terminus, the 390-residue chain is MLKTLKDKKLENCSSINNKSKKQKHIVVGLSGGVDSSLSAALLMEDGWKVEGLTLWLMKGEGSCCSEGLVDAAGLCEDLGIQHNILDSRVIFEREVIKKTTEGYESGYTPLPCSMCNKNVKFEEMLKFVIKQKEFTYIATGHYARVIKSSCEHINNSENFQFKDFLLLRGADRNKDQSYFLYSLSQEVLSRLILPLGDLKKEETRKEALRLGLRTAKKPESQDLCLVEHYGSMQKFIDNHVKTKNGEIKHINGKTLGTHNGIQHFTIGQRKGLGIAWPEPLYVESLDKQKNIVYVANKNDLLKREAIIKEVNWVSIEAPIKEIEVEAQIRYRSEPVKGILVPLKSKDNLTKRFKLIFEDNQSSVTPGQAAVFYKGEILLGGGLISEFSKK.

ATP-binding positions include 29–36 (GLSGGVDS) and Leu-55. Cys-116 serves as the catalytic Nucleophile. A disulfide bridge links Cys-116 with Cys-225. Gly-141 is a binding site for ATP. The interaction with tRNA stretch occupies residues 175-177 (KDQ). Residue Cys-225 is the Cysteine persulfide intermediate of the active site. An interaction with tRNA region spans residues 330-331 (RY).

Belongs to the MnmA/TRMU family.

It localises to the cytoplasm. The enzyme catalyses S-sulfanyl-L-cysteinyl-[protein] + uridine(34) in tRNA + AH2 + ATP = 2-thiouridine(34) in tRNA + L-cysteinyl-[protein] + A + AMP + diphosphate + H(+). Functionally, catalyzes the 2-thiolation of uridine at the wobble position (U34) of tRNA, leading to the formation of s(2)U34. The sequence is that of tRNA-specific 2-thiouridylase MnmA from Prochlorococcus marinus (strain MIT 9515).